The chain runs to 152 residues: Small integral membrane protein 28 (152 aa).

Residues 52–72 (FLCILLPATILLFLAFLLLFL) traverse the membrane as a helical segment. The tract at residues 117 to 152 (PLPPEATLPSQCLPPSYEEATRNPPGEEAQGCSPSV) is disordered.

The protein resides in the membrane. The chain is Small integral membrane protein 28 from Homo sapiens (Human).